A 457-amino-acid chain; its full sequence is Tubulin alpha chain (457 aa).

8 residues coordinate GTP: Gln12, Glu77, Ser146, Gly150, Thr151, Thr186, Asn213, and Asn235. Position 77 (Glu77) interacts with Mg(2+).

This sequence belongs to the tubulin family. As to quaternary structure, dimer of alpha and beta chains. A typical microtubule is a hollow water-filled tube with an outer diameter of 25 nm and an inner diameter of 15 nM. Alpha-beta heterodimers associate head-to-tail to form protofilaments running lengthwise along the microtubule wall with the beta-tubulin subunit facing the microtubule plus end conferring a structural polarity. Microtubules usually have 13 protofilaments but different protofilament numbers can be found in some organisms and specialized cells. Requires Mg(2+) as cofactor. Post-translationally, undergoes a tyrosination/detyrosination cycle, the cyclic removal and re-addition of a C-terminal tyrosine residue by the enzymes tubulin tyrosine carboxypeptidase (TTCP) and tubulin tyrosine ligase (TTL), respectively.

Its subcellular location is the cytoplasm. It localises to the cytoskeleton. It carries out the reaction GTP + H2O = GDP + phosphate + H(+). Functionally, tubulin is the major constituent of microtubules, a cylinder consisting of laterally associated linear protofilaments composed of alpha- and beta-tubulin heterodimers. Microtubules grow by the addition of GTP-tubulin dimers to the microtubule end, where a stabilizing cap forms. Below the cap, tubulin dimers are in GDP-bound state, owing to GTPase activity of alpha-tubulin. The polypeptide is Tubulin alpha chain (tubA) (Dictyostelium discoideum (Social amoeba)).